The chain runs to 313 residues: Ribosomal RNA small subunit methyltransferase H (313 aa).

Residues 48 to 50, Asp-68, Phe-102, Asp-120, and Gln-127 each bind S-adenosyl-L-methionine; that span reads GGH. The disordered stretch occupies residues 290 to 313; sequence TATEEEIDRNPRSRSAKLRAAARK. Residues 301 to 313 show a composition bias toward basic residues; that stretch reads RSRSAKLRAAARK.

This sequence belongs to the methyltransferase superfamily. RsmH family.

The protein resides in the cytoplasm. The catalysed reaction is cytidine(1402) in 16S rRNA + S-adenosyl-L-methionine = N(4)-methylcytidine(1402) in 16S rRNA + S-adenosyl-L-homocysteine + H(+). Specifically methylates the N4 position of cytidine in position 1402 (C1402) of 16S rRNA. In Koribacter versatilis (strain Ellin345), this protein is Ribosomal RNA small subunit methyltransferase H.